We begin with the raw amino-acid sequence, 311 residues long: HPr kinase/phosphorylase (311 aa).

Catalysis depends on residues His138 and Lys159. Position 153 to 160 (153 to 160) interacts with ATP; that stretch reads GDSGIGKS. Ser160 contacts Mg(2+). The active-site Proton acceptor; for phosphorylation activity. Proton donor; for dephosphorylation activity is Asp177. Residues 201–210 form an important for the catalytic mechanism of both phosphorylation and dephosphorylation region; that stretch reads IEIRGVGIID. Glu202 is a binding site for Mg(2+). Residue Arg243 is part of the active site. The segment at 264 to 269 is important for the catalytic mechanism of dephosphorylation; the sequence is PVKTGR.

Belongs to the HPrK/P family. In terms of assembly, homohexamer. Mg(2+) serves as cofactor.

It catalyses the reaction [HPr protein]-L-serine + ATP = [HPr protein]-O-phospho-L-serine + ADP + H(+). The enzyme catalyses [HPr protein]-O-phospho-L-serine + phosphate + H(+) = [HPr protein]-L-serine + diphosphate. In terms of biological role, catalyzes the ATP- as well as the pyrophosphate-dependent phosphorylation of a specific serine residue in HPr, a phosphocarrier protein of the phosphoenolpyruvate-dependent sugar phosphotransferase system (PTS). HprK/P also catalyzes the pyrophosphate-producing, inorganic phosphate-dependent dephosphorylation (phosphorolysis) of seryl-phosphorylated HPr (P-Ser-HPr). The two antagonistic activities of HprK/P are regulated by several intracellular metabolites, which change their concentration in response to the absence or presence of rapidly metabolisable carbon sources (glucose, fructose, etc.) in the growth medium. Therefore, by controlling the phosphorylation state of HPr, HPrK/P is a sensor enzyme that plays a major role in the regulation of carbon metabolism and sugar transport: it mediates carbon catabolite repression (CCR), and regulates PTS-catalyzed carbohydrate uptake and inducer exclusion. The protein is HPr kinase/phosphorylase of Streptococcus pneumoniae (strain 70585).